The chain runs to 264 residues: Phosphonoacetaldehyde hydrolase (264 aa).

The Nucleophile role is filled by Asp-9. The Mg(2+) site is built by Asp-9 and Ala-11. The active-site Schiff-base intermediate with substrate is Lys-50. Mg(2+) is bound at residue Asp-183.

This sequence belongs to the HAD-like hydrolase superfamily. PhnX family. As to quaternary structure, homodimer. Mg(2+) serves as cofactor.

It carries out the reaction phosphonoacetaldehyde + H2O = acetaldehyde + phosphate + H(+). Involved in phosphonate degradation. The chain is Phosphonoacetaldehyde hydrolase from Bacillus cereus (strain ATCC 10987 / NRS 248).